Here is a 376-residue protein sequence, read N- to C-terminus: Alcohol dehydrogenase class-3 (376 aa).

Positions 47, 69, 99, 102, 105, 113, and 176 each coordinate Zn(2+).

This sequence belongs to the zinc-containing alcohol dehydrogenase family. Class-III subfamily. Homodimer. Zn(2+) serves as cofactor. As to expression, expressed in the skeletal muscle, heart, gill filaments and liver, with highest levels in the kidney.

It is found in the cytoplasm. The catalysed reaction is a primary alcohol + NAD(+) = an aldehyde + NADH + H(+). It carries out the reaction a secondary alcohol + NAD(+) = a ketone + NADH + H(+). The enzyme catalyses S-(hydroxymethyl)glutathione + NADP(+) = S-formylglutathione + NADPH + H(+). It catalyses the reaction S-(hydroxymethyl)glutathione + NAD(+) = S-formylglutathione + NADH + H(+). The catalysed reaction is S-nitrosoglutathione + NADH + H(+) = S-(hydroxysulfenamide)glutathione + NAD(+). Class-III ADH is remarkably ineffective in oxidizing ethanol, but it readily catalyzes the oxidation of long-chain primary alcohols and the oxidation of S-(hydroxymethyl) glutathione. Also acts as a S-nitroso-glutathione reductase by catalyzing the NADH-dependent reduction of S-nitrosoglutathione, thereby regulating protein S-nitrosylation. The chain is Alcohol dehydrogenase class-3 from Sparus aurata (Gilthead sea bream).